We begin with the raw amino-acid sequence, 120 residues long: MFTLPGYDAFLGFLLISAAVPALALVTNKLISPKSQPGERELTYESGMEPIGGAWIQFNIRYYMFALVFVIFDVETVFLYPWAVAFHKLGLLAFIEALIFISILIVALAYAWRKGALEWS.

Transmembrane regions (helical) follow at residues 6–26 (GYDAFLGFLLISAAVPALALV), 64–84 (MFALVFVIFDVETVFLYPWAV), and 89–109 (LGLLAFIEALIFISILIVALA).

It belongs to the complex I subunit 3 family. NDH-1 can be composed of about 15 different subunits; different subcomplexes with different compositions have been identified which probably have different functions.

The protein localises to the cellular thylakoid membrane. It carries out the reaction a plastoquinone + NADH + (n+1) H(+)(in) = a plastoquinol + NAD(+) + n H(+)(out). The enzyme catalyses a plastoquinone + NADPH + (n+1) H(+)(in) = a plastoquinol + NADP(+) + n H(+)(out). In terms of biological role, NDH-1 shuttles electrons from an unknown electron donor, via FMN and iron-sulfur (Fe-S) centers, to quinones in the respiratory and/or the photosynthetic chain. The immediate electron acceptor for the enzyme in this species is believed to be plastoquinone. Couples the redox reaction to proton translocation, and thus conserves the redox energy in a proton gradient. Cyanobacterial NDH-1 also plays a role in inorganic carbon-concentration. The polypeptide is NAD(P)H-quinone oxidoreductase subunit 3 (Prochlorococcus marinus (strain SARG / CCMP1375 / SS120)).